Consider the following 607-residue polypeptide: Polyadenylate-binding protein 1-like (607 aa).

RRM domains lie at 11–89 (SSLY…WSHR), 99–175 (GNIF…HFKS), 191–268 (TNIY…RAQK), and 294–370 (VNLY…LAQR). Residues 523–600 (HQPLTVSMLA…AVAVLQVHRE (78 aa)) form the PABC domain.

This sequence belongs to the polyadenylate-binding protein type-1 family. As to expression, expressed in ovary and testis.

It localises to the cytoplasm. In terms of biological role, poly(A)-binding protein involved in oocyte maturation and early embryo development. It is required for cytosolic mRNA polyadenylation and translational activation of maternally stored mRNA in oocytes. This is Polyadenylate-binding protein 1-like from Mus musculus (Mouse).